A 931-amino-acid polypeptide reads, in one-letter code: Histone-lysine N-methyltransferase EZ1 (931 aa).

Positions 1–30 are enriched in low complexity; sequence MEAEAAAAVVASSASASASAGRSRPSSSAA. Disordered stretches follow at residues 1–37, 372–450, and 491–549; these read MEAE…SNSA, PTHS…ITNR, and RNGN…YDSS. The span at 375–385 shows a compositional bias: polar residues; the sequence is SSDNVMNQPGS. Residues 386-398 are compositionally biased toward basic residues; it reads NRKKNGSSGRKTK. Over residues 423-433 the composition is skewed to polar residues; it reads SNKSPQHSPSP. The segment covering 500 to 509 has biased composition (low complexity); it reads SSQQSSPSTR. Residues 528–549 are compositionally biased toward basic and acidic residues; sequence AHNDSTEEANNRHSATDGYDSS. Residues 565 to 615 form the SANT domain; it reads YLRSWKAIEQGLLVKGLEIFGRNSCLIARNLLGGMKTCKDVFQYMNYIENN. In terms of domain architecture, CXC spans 664–763; that stretch reads FKRITERKDQ…TLGVPNQRGD (100 aa). In terms of domain architecture, SET spans 778–893; that stretch reads QRVLLGRSDV…AGEELFYDYR (116 aa). Residues 903-915 show a composition bias toward basic and acidic residues; the sequence is ARKPEASGAKDDG. The segment at 903-931 is disordered; the sequence is ARKPEASGAKDDGQPFNGRAKKLAQNNRG.

It belongs to the class V-like SAM-binding methyltransferase superfamily. Histone-lysine methyltransferase family. EZ subfamily. In terms of tissue distribution, widely expressed.

Its subcellular location is the nucleus. The enzyme catalyses L-lysyl(27)-[histone H3] + 3 S-adenosyl-L-methionine = N(6),N(6),N(6)-trimethyl-L-lysyl(27)-[histone H3] + 3 S-adenosyl-L-homocysteine + 3 H(+). In terms of biological role, polycomb group (PcG) protein. Catalytic subunit of some PcG multiprotein complex, which methylates 'Lys-27' of histone H3, leading to transcriptional repression of the affected target genes. PcG proteins are not required to initiate repression, but to maintain it during later stages of development. This is Histone-lysine N-methyltransferase EZ1 (EZ1) from Zea mays (Maize).